The primary structure comprises 288 residues: Plasmodesmata-located protein 6 (288 aa).

A signal peptide spans 1–22 (MFATKTVLFIAVVSLLGTFSSA). The Extracellular portion of the chain corresponds to 23–256 (AVDTFIYGGC…NNDDDEIEKT (234 aa)). Gnk2-homologous domains lie at 25–132 (DTFI…NTTF) and 137–234 (DKTV…ARGG). 6 disulfides stabilise this stretch: cysteine 32–cysteine 110, cysteine 84–cysteine 95, cysteine 98–cysteine 123, cysteine 145–cysteine 212, cysteine 188–cysteine 197, and cysteine 200–cysteine 225. The helical transmembrane segment at 257 to 277 (LAIIVGLIAGVTLLVVFLSFM) threads the bilayer. Positions 257 to 277 (LAIIVGLIAGVTLLVVFLSFM) are necessary and sufficient for plasmodesmal targeting. Residues 278–288 (AKSCERGKGGK) are Cytoplasmic-facing.

Belongs to the cysteine-rich repeat secretory protein family. Plasmodesmata-located proteins (PDLD) subfamily. As to quaternary structure, (Microbial infection) Interacts with Grapevine fanleaf virus (GFLV) 2B-MP. Highly expressed in inflorescence silique (at mRNA level).

The protein resides in the cell membrane. Its subcellular location is the cell junction. It localises to the plasmodesma. Modulates cell-to-cell trafficking. This is Plasmodesmata-located protein 6 from Arabidopsis thaliana (Mouse-ear cress).